The following is a 281-amino-acid chain: Acetyl-coenzyme A carboxylase carboxyl transferase subunit beta (281 aa).

Residues 24 to 281 form the CoA carboxyltransferase N-terminal domain; it reads GLWYKSPKGK…TKLLTMLANN (258 aa).

Belongs to the AccD/PCCB family. Acetyl-CoA carboxylase is a heterohexamer composed of biotin carboxyl carrier protein (AccB), biotin carboxylase (AccC) and two subunits each of ACCase subunit alpha (AccA) and ACCase subunit beta (AccD).

Its subcellular location is the cytoplasm. The catalysed reaction is N(6)-carboxybiotinyl-L-lysyl-[protein] + acetyl-CoA = N(6)-biotinyl-L-lysyl-[protein] + malonyl-CoA. It participates in lipid metabolism; malonyl-CoA biosynthesis; malonyl-CoA from acetyl-CoA: step 1/1. Functionally, component of the acetyl coenzyme A carboxylase (ACC) complex. Biotin carboxylase (BC) catalyzes the carboxylation of biotin on its carrier protein (BCCP) and then the CO(2) group is transferred by the transcarboxylase to acetyl-CoA to form malonyl-CoA. This Amoebophilus asiaticus (strain 5a2) protein is Acetyl-coenzyme A carboxylase carboxyl transferase subunit beta.